The primary structure comprises 1369 residues: MutS protein homolog 5 (1369 aa).

Positions 138–190 (IYEDGTTEEGTSEDTVPTWDSSLAYSTDETTAEKEEKEEDEDDDDEGLPAKLN) are disordered. The span at 173–184 (EKEEDEDDDDEG) shows a compositional bias: acidic residues. ATP is bound at residue 639 to 646 (GPNACGKS). Disordered regions lie at residues 880 to 915 (SMRNVSEEIEKERSEASTPASKSRSTITARSNSVLS), 935 to 1135 (KKKK…RSSN), 1153 to 1182 (LKSQDTYDPNVTPRSSSRRELRPDVSHSQN), and 1248 to 1278 (NFIFKTPEPRSSEKQRSLLKNKGQASNSSIS). The span at 884–894 (VSEEIEKERSE) shows a compositional bias: basic and acidic residues. 2 stretches are compositionally biased toward polar residues: residues 895-915 (ASTPASKSRSTITARSNSVLS) and 941-950 (TGSSMESSMS). Acidic residues predominate over residues 954 to 967 (FQEEDEGTEGEEDQ). Residues 991 to 1003 (QSINSRHSFSTRT) show a composition bias toward polar residues. The span at 1024 to 1037 (STSTSSPGPSASKS) shows a compositional bias: low complexity. The span at 1049–1065 (VKESQVLETPKQLSISS) shows a compositional bias: polar residues. Residues 1073 to 1084 (SSEKDVISRVSE) show a composition bias toward basic and acidic residues. Polar residues-rich tracts occupy residues 1111–1124 (KNRSMNQSLIQSAR) and 1153–1167 (LKSQDTYDPNVTPRS). A compositionally biased stretch (basic and acidic residues) spans 1254–1263 (PEPRSSEKQR).

Belongs to the DNA mismatch repair MutS family. In terms of assembly, heterooligomer of him-14 and msh-5. Interacts with the brc-1-brd-1 heterodimer. Expressed in the germline.

It localises to the chromosome. In terms of biological role, crucial component in meiotic recombination, functioning at some point after the initiation step of recombination. Plays a role in promoting the crossover outcome of meiotic recombination events. Required for formation of normal meiotic crossover, and crossover and chiasmata generated by artificially made DNA breaks. Together with him-14 and zhp-3 plays a role in the activation of DNA damage-dependent apoptosis at the DNA damage checkpoint in pachytene cells. The chain is MutS protein homolog 5 from Caenorhabditis elegans.